A 427-amino-acid chain; its full sequence is 3-phosphoshikimate 1-carboxyvinyltransferase (427 aa).

Positions 20, 21, and 25 each coordinate 3-phosphoshikimate. Residue lysine 20 coordinates phosphoenolpyruvate. Phosphoenolpyruvate is bound by residues glycine 92 and arginine 120. Residues serine 166, glutamine 168, aspartate 312, and lysine 339 each contribute to the 3-phosphoshikimate site. Residue glutamine 168 coordinates phosphoenolpyruvate. The active-site Proton acceptor is aspartate 312. Phosphoenolpyruvate is bound by residues arginine 343 and arginine 385.

Belongs to the EPSP synthase family. Monomer.

Its subcellular location is the cytoplasm. It carries out the reaction 3-phosphoshikimate + phosphoenolpyruvate = 5-O-(1-carboxyvinyl)-3-phosphoshikimate + phosphate. It functions in the pathway metabolic intermediate biosynthesis; chorismate biosynthesis; chorismate from D-erythrose 4-phosphate and phosphoenolpyruvate: step 6/7. Catalyzes the transfer of the enolpyruvyl moiety of phosphoenolpyruvate (PEP) to the 5-hydroxyl of shikimate-3-phosphate (S3P) to produce enolpyruvyl shikimate-3-phosphate and inorganic phosphate. The polypeptide is 3-phosphoshikimate 1-carboxyvinyltransferase (Streptococcus sanguinis (strain SK36)).